The sequence spans 943 residues: Receptor-like kinase TMK3 (943 aa).

A signal peptide spans 1-24 (MSNSHLGTLCFIISLLGLANFSLS). Topologically, residues 25 to 482 (QTGLDDSTMQ…ETSKKSSNVK (458 aa)) are extracellular. N-linked (GlcNAc...) asparagine glycosylation is present at asparagine 41. Cysteine 54 and cysteine 61 are oxidised to a cystine. LRR repeat units follow at residues 64–88 (SNRV…LQSL), 89–111 (SELV…LSGL), 112–134 (SRLQ…LFSG), 136–160 (SSLQ…VKEA), 162–183 (SLQN…FFGS), 186–210 (LPSL…FAGT), 212–232 (IQSL…LGNM), 233–254 (TSLV…DLSG), 255–279 (LVSL…LVSL), and 281–301 (SLTT…LFGK). N-linked (GlcNAc...) asparagine glycosylation is found at asparagine 165 and asparagine 170. N-linked (GlcNAc...) asparagine glycans are attached at residues asparagine 223 and asparagine 231. A glycan (N-linked (GlcNAc...) asparagine) is linked at asparagine 286. Intrachain disulfides connect cysteine 315–cysteine 323 and cysteine 353–cysteine 361. LRR repeat units lie at residues 363 to 386 (GGNI…SLAK), 387 to 410 (LTSL…ELTT), and 411 to 438 (LSKL…VTLV). An N-linked (GlcNAc...) asparagine glycan is attached at asparagine 365. Residues 441–476 (GNANMGKNGPNKTSDAPGASPGSKPSGGSDGSETSK) form a disordered region. N-linked (GlcNAc...) asparagine glycosylation is present at asparagine 451. The segment covering 454–467 (SDAPGASPGSKPSG) has biased composition (low complexity). A helical transmembrane segment spans residues 483-503 (IIVPVVGGVVGALCLVGLGVC). Over 504 to 943 (LYAKKRKRPA…ADSFTSVDGR (440 aa)) the chain is Cytoplasmic. Residues 514 to 534 (RVQSPSSNMVIHPHHSGDNDD) form a disordered region. One can recognise a Protein kinase domain in the interval 585-866 (FSEENILGRG…AHIVNVLSSL (282 aa)). ATP-binding positions include 591 to 599 (LGRGGFGTV) and lysine 613. The active-site Proton acceptor is aspartate 714. Positions 904–943 (QTADDSGSSSSAYGSKDNTQTSIPTRPSGFADSFTSVDGR) are disordered. The span at 906 to 918 (ADDSGSSSSAYGS) shows a compositional bias: low complexity. The segment covering 919–928 (KDNTQTSIPT) has biased composition (polar residues).

This sequence belongs to the protein kinase superfamily. Ser/Thr protein kinase family. As to expression, expressed in roots, leaves, stems, siliques and flowers.

It localises to the membrane. The catalysed reaction is L-seryl-[protein] + ATP = O-phospho-L-seryl-[protein] + ADP + H(+). The enzyme catalyses L-threonyl-[protein] + ATP = O-phospho-L-threonyl-[protein] + ADP + H(+). Functionally, involved in auxin signal transduction and cell expansion and proliferation regulation. The protein is Receptor-like kinase TMK3 of Arabidopsis thaliana (Mouse-ear cress).